Here is a 345-residue protein sequence, read N- to C-terminus: Serine/threonine-protein kinase US3 homolog (345 aa).

A Protein kinase domain is found at 49–334 (FSVLETFTPG…KALLDFAAFY (286 aa)). ATP is bound by residues 55–63 (FTPGAEGFT) and K78. D162 (proton acceptor) is an active-site residue.

It belongs to the protein kinase superfamily. Ser/Thr protein kinase family. Phosphorylated by UL13 homolog; this phosphorylation regulates subsequent phosphorylation of UL31 and UL34 homologs by US3. Autophosphorylated.

The protein localises to the host cytoplasm. The protein resides in the host nucleus. The enzyme catalyses L-seryl-[protein] + ATP = O-phospho-L-seryl-[protein] + ADP + H(+). The catalysed reaction is L-threonyl-[protein] + ATP = O-phospho-L-threonyl-[protein] + ADP + H(+). Functionally, multifunctional serine/threonine kinase that plays a role in several processes including egress of virus particles from the nucleus, modulation of the actin cytoskeleton and inhibition of apoptosis. Phosphorylates UL31 and UL34 homologs, two critical regulators of capsid budding from nucleus to endoplasmic reticulum, thereby facilitating virion egress. Modulates and redistributes host components of the nuclear envelope, including LMNA, emerin/EMD and the nuclear matrix protein MATR3. Phosphorylates envelope glycoprotein B (gB), probably to direct it to the cell surface. Promotes virus intracellular spread by restructuring host cell cytoskeleton. Blocks host apoptosis to extend cell survival and allow efficient viral replication. Promotes viral gene expression by phosphorylating host HDAC2 to reduce viral genome silencing. The polypeptide is Serine/threonine-protein kinase US3 homolog (US2) (Chlorocebus aethiops (Green monkey)).